Consider the following 1420-residue polypeptide: Protein CFT1 (1420 aa).

A compositionally biased stretch (acidic residues) spans 161–182 (DEDEEEEEEEDEEDEDEGEENI). 3 disordered regions span residues 161–210 (DEDE…TTNQ), 435–488 (QVRY…QKTI), and 722–760 (NTSS…PPPK). 2 stretches are compositionally biased toward basic and acidic residues: residues 183–204 (DDTK…EDKN) and 437–461 (RYRD…KEDN). Residues 462–483 (KDDDDNDDDDEDDLYKEEEEEE) show a composition bias toward acidic residues.

Belongs to the CFT1 family.

Its subcellular location is the nucleus. In terms of biological role, RNA-binding component of the cleavage and polyadenylation factor (CPF) complex, which plays a key role in polyadenylation-dependent pre-mRNA 3'-end formation and cooperates with cleavage factors including the CFIA complex and NAB4/CFIB. Involved in poly(A) site recognition. May be involved in coupling transcription termination and mRNA 3'-end formation. The chain is Protein CFT1 (CFT1) from Candida albicans (strain SC5314 / ATCC MYA-2876) (Yeast).